The following is a 309-amino-acid chain: Integral membrane protein sed5 (309 aa).

Residues 1 to 288 (MSFQDRTAEF…KFYERMSSNR (288 aa)) lie on the Cytoplasmic side of the membrane. Residues 37 to 66 (KHQKSEFTRIAQKIANQINQTGEKLQKLSQ) are a coiled coil. The 63-residue stretch at 218–280 (DTYSQQRMSS…GSAQREIVKF (63 aa)) folds into the t-SNARE coiled-coil homology domain. The helical; Anchor for type IV membrane protein transmembrane segment at 289-308 (ALLFKIFGIVIIFFLLWVLV) threads the bilayer. Threonine 309 is a topological domain (vesicular).

It belongs to the syntaxin family.

Its subcellular location is the membrane. It is found in the golgi apparatus membrane. In terms of biological role, required for vesicular transport between the endoplasmic reticulum and the Golgi complex. Acts as a target organelle soluble NSF attachment protein receptor (t-SNARE). The protein is Integral membrane protein sed5 (sed5) of Schizosaccharomyces pombe (strain 972 / ATCC 24843) (Fission yeast).